A 92-amino-acid chain; its full sequence is Small ribosomal subunit protein uS19 (92 aa).

The protein belongs to the universal ribosomal protein uS19 family.

Functionally, protein S19 forms a complex with S13 that binds strongly to the 16S ribosomal RNA. The sequence is that of Small ribosomal subunit protein uS19 from Streptococcus agalactiae serotype Ia (strain ATCC 27591 / A909 / CDC SS700).